The primary structure comprises 120 residues: ATP-dependent Clp protease adapter protein ClpS (120 aa).

The tract at residues 1 to 20 (MATKSPVNPKVPLVQEPDRD) is disordered.

It belongs to the ClpS family. In terms of assembly, binds to the N-terminal domain of the chaperone ClpA.

Functionally, involved in the modulation of the specificity of the ClpAP-mediated ATP-dependent protein degradation. This Albidiferax ferrireducens (strain ATCC BAA-621 / DSM 15236 / T118) (Rhodoferax ferrireducens) protein is ATP-dependent Clp protease adapter protein ClpS.